Consider the following 646-residue polypeptide: Threonine--tRNA ligase (646 aa).

Residues 1–63 (MAQISLTFPD…EADAKIAIHT (63 aa)) enclose the TGS domain. The catalytic stretch occupies residues 247-544 (DHRKLGKEME…LIENYAGKLP (298 aa)). Residues Cys344, His395, and His521 each contribute to the Zn(2+) site.

It belongs to the class-II aminoacyl-tRNA synthetase family. Homodimer. Zn(2+) serves as cofactor.

The protein localises to the cytoplasm. The catalysed reaction is tRNA(Thr) + L-threonine + ATP = L-threonyl-tRNA(Thr) + AMP + diphosphate + H(+). Functionally, catalyzes the attachment of threonine to tRNA(Thr) in a two-step reaction: L-threonine is first activated by ATP to form Thr-AMP and then transferred to the acceptor end of tRNA(Thr). Also edits incorrectly charged L-seryl-tRNA(Thr). This Cereibacter sphaeroides (strain ATCC 17025 / ATH 2.4.3) (Rhodobacter sphaeroides) protein is Threonine--tRNA ligase.